The primary structure comprises 121 residues: Small ribosomal subunit protein uS11 (121 aa).

Belongs to the universal ribosomal protein uS11 family. Part of the 30S ribosomal subunit. Interacts with proteins S7 and S18. Binds to IF-3.

Located on the platform of the 30S subunit, it bridges several disparate RNA helices of the 16S rRNA. Forms part of the Shine-Dalgarno cleft in the 70S ribosome. This Mycoplasma pneumoniae (strain ATCC 29342 / M129 / Subtype 1) (Mycoplasmoides pneumoniae) protein is Small ribosomal subunit protein uS11.